A 183-amino-acid polypeptide reads, in one-letter code: SsrA-binding protein (183 aa).

The tract at residues 1-27 (MAKKATLVDHGAAKGKKKAQSKVSKKN) is disordered. Over residues 13–27 (AKGKKKAQSKVSKKN) the composition is skewed to basic residues.

Belongs to the SmpB family.

It is found in the cytoplasm. Functionally, required for rescue of stalled ribosomes mediated by trans-translation. Binds to transfer-messenger RNA (tmRNA), required for stable association of tmRNA with ribosomes. tmRNA and SmpB together mimic tRNA shape, replacing the anticodon stem-loop with SmpB. tmRNA is encoded by the ssrA gene; the 2 termini fold to resemble tRNA(Ala) and it encodes a 'tag peptide', a short internal open reading frame. During trans-translation Ala-aminoacylated tmRNA acts like a tRNA, entering the A-site of stalled ribosomes, displacing the stalled mRNA. The ribosome then switches to translate the ORF on the tmRNA; the nascent peptide is terminated with the 'tag peptide' encoded by the tmRNA and targeted for degradation. The ribosome is freed to recommence translation, which seems to be the essential function of trans-translation. This is SsrA-binding protein from Corynebacterium kroppenstedtii (strain DSM 44385 / JCM 11950 / CIP 105744 / CCUG 35717).